A 604-amino-acid polypeptide reads, in one-letter code: NRPS-independent siderophore synthetase-like protein ankE (604 aa).

It catalyses the reaction cyclo(L-arginyl-(Z)-dehydro-4-O-homoseryl-tyrosyl) + citrate + ATP = NK13650 B + AMP + diphosphate + H(+). Its pathway is secondary metabolite biosynthesis. Its function is as follows. NRPS-independent siderophore synthetase-like protein; part of the ank cluster that mediates the biosynthesis of NK13650 C, a highly modified cyclo-arginine-tyrosine dipeptide. AnkE is responsible of the production of NK13650 B via ligation of citrate to the ankD product. Within the pathway, the cyclodipeptide synthase ankA acts as the scaffold-generating enzyme and is responsible for formation of the cyclo-Arg-Tyr diketopiperazine (cRY) from L-Arg and L-Tyr. The ankA product cRY is desaturated by the cytochrome P450 monooxygenase ankB to yield a dehydro-cyclodipeptide intermediate. The FAD-dependent monooxygenase ankC then installs the m-OH, ankD catalyzes the attachment of L-homoserine, and ankE ligates citrate to the ankD product to yield NK13650 B. The O-methyltransferase ankF is responsible for methylation of the C-17 phenol group of NK13650 B to produce NK13650 D. Amidation of NK13650 D with L-Asp by ankG then leads to the production of NK13650 C, whereas amidation of NK13650 B produces NK13650 A. This is NRPS-independent siderophore synthetase-like protein ankE from Aspergillus thermomutatus (Neosartorya pseudofischeri).